The chain runs to 259 residues: 3-deoxy-manno-octulosonate cytidylyltransferase (259 aa).

This sequence belongs to the KdsB family.

The protein localises to the cytoplasm. It carries out the reaction 3-deoxy-alpha-D-manno-oct-2-ulosonate + CTP = CMP-3-deoxy-beta-D-manno-octulosonate + diphosphate. Its pathway is nucleotide-sugar biosynthesis; CMP-3-deoxy-D-manno-octulosonate biosynthesis; CMP-3-deoxy-D-manno-octulosonate from 3-deoxy-D-manno-octulosonate and CTP: step 1/1. The protein operates within bacterial outer membrane biogenesis; lipopolysaccharide biosynthesis. In terms of biological role, activates KDO (a required 8-carbon sugar) for incorporation into bacterial lipopolysaccharide in Gram-negative bacteria. The sequence is that of 3-deoxy-manno-octulosonate cytidylyltransferase from Actinobacillus succinogenes (strain ATCC 55618 / DSM 22257 / CCUG 43843 / 130Z).